An 818-amino-acid polypeptide reads, in one-letter code: Cytosolic phospholipase A2 delta (818 aa).

The region spanning 5 to 124 (SPGGPPGHPY…LPGKLLRKTF (120 aa)) is the C2 domain. Positions 38, 44, 94, 96, and 102 each coordinate Ca(2+). The 546-residue stretch at 273–818 (GCPEELAVHL…LEARPPRAQT (546 aa)) folds into the PLA2c domain. 330–331 (GG) lines the substrate pocket. Residue S361 is the Nucleophile of the active site. The active-site Proton acceptor is D647.

The cofactor is Ca(2+). In terms of tissue distribution, expressed in stratified squamous epithelia, such as those in skin and cervix, but not in other tissues. Strongly expressed in the upper spinous layer of the psoriatic epidermis, expressed weakly and discontinuously in atopic dermatitis and mycosis fungoides, and not detected in the epidermis of normal skin.

The protein localises to the cytoplasm. It is found in the cytosol. Its subcellular location is the membrane. It carries out the reaction a 1,2-diacyl-sn-glycero-3-phosphocholine + H2O = a 1-acyl-sn-glycero-3-phosphocholine + a fatty acid + H(+). The catalysed reaction is 1-hexadecanoyl-2-(5Z,8Z,11Z,14Z-eicosatetraenoyl)-sn-glycero-3-phosphocholine + H2O = 1-hexadecanoyl-sn-glycero-3-phosphocholine + (5Z,8Z,11Z,14Z)-eicosatetraenoate + H(+). It catalyses the reaction 1-hexadecanoyl-2-(9Z,12Z-octadecadienoyl)-sn-glycero-3-phosphocholine + H2O = (9Z,12Z)-octadecadienoate + 1-hexadecanoyl-sn-glycero-3-phosphocholine + H(+). The enzyme catalyses 1-hexadecanoyl-2-(9Z-octadecenoyl)-sn-glycero-3-phosphocholine + H2O = 1-hexadecanoyl-sn-glycero-3-phosphocholine + (9Z)-octadecenoate + H(+). It carries out the reaction 1-hexadecanoyl-2-(5Z,8Z,11Z,14Z-eicosatetraenoyl)-sn-glycero-3-phosphoethanolamine + H2O = 1-hexadecanoyl-sn-glycero-3-phosphoethanolamine + (5Z,8Z,11Z,14Z)-eicosatetraenoate + H(+). The catalysed reaction is 1-hexadecanoyl-2-(9Z,12Z-octadecadienoyl)-sn-glycero-3-phosphoethanolamine + H2O = 1-hexadecanoyl-sn-glycero-3-phosphoethanolamine + (9Z,12Z)-octadecadienoate + H(+). It participates in lipid metabolism; fatty acid metabolism. Its activity is regulated as follows. Stimulated by cytosolic Ca(2+). Functionally, calcium-dependent phospholipase A2 that selectively hydrolyzes glycerophospholipids in the sn-2 position. Has a preference for linoleic acid at the sn-2 position. This Homo sapiens (Human) protein is Cytosolic phospholipase A2 delta.